A 500-amino-acid polypeptide reads, in one-letter code: Transcription termination factor MTERF8, chloroplastic (500 aa).

Residues methionine 1 to arginine 64 constitute a chloroplast transit peptide.

It belongs to the mTERF family.

The protein resides in the plastid. It is found in the chloroplast. Its function is as follows. Transcription termination factor that is transcriptionally active in chloroplasts. This Arabidopsis thaliana (Mouse-ear cress) protein is Transcription termination factor MTERF8, chloroplastic.